Reading from the N-terminus, the 193-residue chain is PBAN-type neuropeptides (193 aa).

The first 19 residues, 1–19, serve as a signal peptide directing secretion; that stretch reads MYGAVLPGLFFIFISCVVA. I46 carries the isoleucine amide modification. Leucine amide occurs at positions 102 and 122. The interval 124-158 is disordered; sequence RRLADDTPATPADQEMYRPDPEQIDSRTKYFSPRL. Over residues 138 to 151 the composition is skewed to basic and acidic residues; it reads EMYRPDPEQIDSRT. L158 and L168 each carry leucine amide. Positions 186–193 are excised as a propeptide; sequence STNKTQST.

This sequence belongs to the pyrokinin family. Expressed in the mandibular, maxillary and labial neuromeres of the male and female brain-subesophageal ganglions, in the corpora cardiaca and all around the corpora allata, and at a lower level in the brain near the calyx and pedunculus of the mushroom body (at protein level). Expressed in larvae and adult of both sexes (at protein level). In terms of tissue distribution, expressed in corpora cardiaca (CC), corpora allata (CA) and gnathal ganglion (GNG) (at protein level). Expression in CC and CA detected in most animals, in GNG in some (at protein level). As to expression, expression not detected in CC, CA, AL or GNG (at protein level). Expressed in corpora cardiaca (CC), corpora allata (CA), antennal lobe (AL) and gnathal ganglion (GNG) (at protein level). Expression in CC, CA and GNG detected in most animals, expression in AL detected in few (at protein level). In terms of tissue distribution, expressed in corpora cardiaca (CC), corpora allata (CA), antennal lobe (AL) and gnathal ganglion (GNG) (at protein level). Expression in CC, CA and GNG detected in all animals, expression in AL detected in some (at protein level). As to expression, expressed in corpora cardiaca (CC), corpora allata (CA), antennal lobe (AL) and gnathal ganglion (GNG) (at protein level). Expression in CC, CA and GNG detected in most animals, expression in AL detected in some animals (at protein level).

It is found in the secreted. Its function is as follows. A hormone that controls sex pheromone production in female moths and pheromone responsiveness in male. The chain is PBAN-type neuropeptides from Agrotis ipsilon (Black cutworm moth).